The sequence spans 1798 residues: U3 small nucleolar RNA-associated protein 10 (1798 aa).

An HEAT 1 repeat occupies 583 to 620; the sequence is LDFQALLPFLLVTLTDPSERVRREAAAALAAVGSLYKK. The next 2 helical transmembrane spans lie at 942–962 and 998–1018; these read IQSG…AIVN and ALLL…HSVM. 4 HEAT repeats span residues 1042 to 1079, 1249 to 1286, 1293 to 1331, and 1754 to 1791; these read QTID…AFEH, LTLV…QNPE, IRVL…KYGK, and ALLP…VLGE.

It belongs to the HEATR1/UTP10 family. Component of the ribosomal small subunit (SSU) processome.

Its subcellular location is the nucleus. The protein resides in the nucleolus. It localises to the membrane. Its function is as follows. Involved in nucleolar processing of pre-18S ribosomal RNA. Involved in ribosome biosynthesis. The protein is U3 small nucleolar RNA-associated protein 10 of Aspergillus fumigatus (strain ATCC MYA-4609 / CBS 101355 / FGSC A1100 / Af293) (Neosartorya fumigata).